Reading from the N-terminus, the 247-residue chain is UPF0309 protein GWCH70_1414 (247 aa).

The SIS domain maps to valine 31–proline 214.

The protein belongs to the UPF0309 family.

In Geobacillus sp. (strain WCH70), this protein is UPF0309 protein GWCH70_1414.